The following is a 610-amino-acid chain: UvrABC system protein C (610 aa).

In terms of domain architecture, GIY-YIG spans 16–94 (SQPGVYRMYD…IKLYQPRYNV (79 aa)). Residues 204–239 (DQVLTQLIARMEKASQDLAFEEAARIRDQIQAVRRV) enclose the UVR domain.

It belongs to the UvrC family. As to quaternary structure, interacts with UvrB in an incision complex.

It is found in the cytoplasm. Its function is as follows. The UvrABC repair system catalyzes the recognition and processing of DNA lesions. UvrC both incises the 5' and 3' sides of the lesion. The N-terminal half is responsible for the 3' incision and the C-terminal half is responsible for the 5' incision. This Salmonella heidelberg (strain SL476) protein is UvrABC system protein C.